The sequence spans 238 residues: ATP synthase subunit a (238 aa).

Transmembrane regions (helical) follow at residues 18-38, 76-96, 117-137, 173-193, and 208-230; these read GTTM…TVIG, FIVL…MGIP, VLTL…GIMV, LFGN…LGTT, and WQAF…AMVY.

It belongs to the ATPase A chain family. In terms of assembly, F-type ATPases have 2 components, CF(1) - the catalytic core - and CF(0) - the membrane proton channel. CF(1) has five subunits: alpha(3), beta(3), gamma(1), delta(1), epsilon(1). CF(0) has three main subunits: a(1), b(2) and c(9-12). The alpha and beta chains form an alternating ring which encloses part of the gamma chain. CF(1) is attached to CF(0) by a central stalk formed by the gamma and epsilon chains, while a peripheral stalk is formed by the delta and b chains.

Its subcellular location is the cell membrane. Functionally, key component of the proton channel; it plays a direct role in the translocation of protons across the membrane. The chain is ATP synthase subunit a from Shouchella clausii (strain KSM-K16) (Alkalihalobacillus clausii).